The following is a 123-amino-acid chain: Small ribosomal subunit protein uS12c (123 aa).

A compositionally biased stretch (polar residues) spans 1 to 20 (MPTIQQLIRNTRQPTQNRTK). The segment at 1–27 (MPTIQQLIRNTRQPTQNRTKSPALKAC) is disordered.

It belongs to the universal ribosomal protein uS12 family. As to quaternary structure, part of the 30S ribosomal subunit.

It is found in the plastid. Its subcellular location is the chloroplast. With S4 and S5 plays an important role in translational accuracy. Located at the interface of the 30S and 50S subunits. The polypeptide is Small ribosomal subunit protein uS12c (rps12) (Zygnema circumcarinatum (Green alga)).